The sequence spans 677 residues: MTQVAKKILVTCALPYANGSIHLGHMLEHIQADVWVRYQRMRGHEVNFICADDAHGTPIMLKAQQLGITPEQMIGEMSQEHQTDFAGFNISYDNYHSTHSDENRELSELIYTRLKENGFIKNRTISQLYDPEKGMFLPDRFVKGTCPKCKSADQYGDNCEVCGATYSPTELIEPKSVVSGATPVMRDSEHFFFDLPSFSEMLQAWTRSGALQEQVANKMQEWFESGLQQWDISRDAPYFGFEIPNAPGKYFYVWLDAPIGYMGSFKNLCDKRGDTTSFDEYWKKDSDAELYHFIGKDIVYFHSLFWPAMLEGSHFRKPTNLFVHGYVTVNGAKMSKSRGTFIKASTWLKHFDADSLRYYYTAKLSSRIDDIDLNLEDFVQRVNADIVNKVVNLASRNAGFINKRFDGVLAAELADPQLYKTFTDAAAVIGEAWESREFGKAIREIMALADVANRYVDEQAPWVVAKQEGRDADLQAICSMGINLFRVLMTYLKPVLPTLSERVEAFLNSELNWDAIEQPLLGHKVNTFKALYNRIDMKQVEALVEASKEEVKAAAAPVTGPLADFPIQETITFDDFAKIDLRVALIENAEFVDGSDKLLRLTLDLGGEKRNVFSGIRSAYPDPQALIGRQTVMVANLAPRKMRFGVSEGMVMAAGPGGKDIFLLSPDDGAKPGQQVK.

Residues 15–25 (PYANGSIHLGH) carry the 'HIGH' region motif. Zn(2+) contacts are provided by C146, C149, C159, and C162. A 'KMSKS' region motif is present at residues 333 to 337 (KMSKS). K336 contacts ATP. In terms of domain architecture, tRNA-binding spans 575–677 (DFAKIDLRVA…DGAKPGQQVK (103 aa)).

This sequence belongs to the class-I aminoacyl-tRNA synthetase family. MetG type 1 subfamily. In terms of assembly, homodimer. Zn(2+) serves as cofactor.

Its subcellular location is the cytoplasm. It carries out the reaction tRNA(Met) + L-methionine + ATP = L-methionyl-tRNA(Met) + AMP + diphosphate. Is required not only for elongation of protein synthesis but also for the initiation of all mRNA translation through initiator tRNA(fMet) aminoacylation. The polypeptide is Methionine--tRNA ligase (Salmonella paratyphi B (strain ATCC BAA-1250 / SPB7)).